The chain runs to 172 residues: Disulfide bond formation protein B (172 aa).

At 1-11 (MNPFRWGFRAQ) the chain is on the cytoplasmic side. The chain crosses the membrane as a helical span at residues 12–28 (FLLGFLACAGLLAYAIY). Topologically, residues 29 to 46 (VQLHLGLEPCPLCIFQRI) are periplasmic. A disulfide bond links cysteine 38 and cysteine 41. Residues 47–63 (AFATLALLFLLGALHGP) form a helical membrane-spanning segment. Residues 64 to 70 (RGAGGRK) are Cytoplasmic-facing. A helical transmembrane segment spans residues 71–88 (AYGVLAFIAAGVGMGIAA). The Periplasmic segment spans residues 89–145 (RHVWVQIRPKDMMSSCGPPLSFLSETMGPFEVFRTVLTGTGDCGNIDWRFLGLSMPM). Cysteine 104 and cysteine 131 are oxidised to a cystine. The helical transmembrane segment at 146–164 (WSMVWFVGLALWALYAGFK) threads the bilayer. Residues 165 to 172 (HRGPRKLF) are Cytoplasmic-facing.

This sequence belongs to the DsbB family.

The protein resides in the cell inner membrane. In terms of biological role, required for disulfide bond formation in some periplasmic proteins. Acts by oxidizing the DsbA protein. The chain is Disulfide bond formation protein B from Xanthomonas campestris pv. campestris (strain 8004).